The following is an 89-amino-acid chain: Small ribosomal subunit protein uS15 (89 aa).

A compositionally biased stretch (basic and acidic residues) spans 1–21 (MSIAAERKAEVIKTNARKDGD). The disordered stretch occupies residues 1–24 (MSIAAERKAEVIKTNARKDGDTGS).

The protein belongs to the universal ribosomal protein uS15 family. In terms of assembly, part of the 30S ribosomal subunit. Forms a bridge to the 50S subunit in the 70S ribosome, contacting the 23S rRNA.

One of the primary rRNA binding proteins, it binds directly to 16S rRNA where it helps nucleate assembly of the platform of the 30S subunit by binding and bridging several RNA helices of the 16S rRNA. In terms of biological role, forms an intersubunit bridge (bridge B4) with the 23S rRNA of the 50S subunit in the ribosome. This is Small ribosomal subunit protein uS15 from Rhodopseudomonas palustris (strain BisA53).